A 914-amino-acid polypeptide reads, in one-letter code: Alanine--tRNA ligase (914 aa).

Positions 608, 612, 711, and 715 each coordinate Zn(2+).

The protein belongs to the class-II aminoacyl-tRNA synthetase family. It depends on Zn(2+) as a cofactor.

The protein localises to the cytoplasm. The catalysed reaction is tRNA(Ala) + L-alanine + ATP = L-alanyl-tRNA(Ala) + AMP + diphosphate. In terms of biological role, catalyzes the attachment of alanine to tRNA(Ala) in a two-step reaction: alanine is first activated by ATP to form Ala-AMP and then transferred to the acceptor end of tRNA(Ala). Also edits incorrectly charged Ser-tRNA(Ala) and Gly-tRNA(Ala) via its editing domain. This Methanoregula boonei (strain DSM 21154 / JCM 14090 / 6A8) protein is Alanine--tRNA ligase.